A 653-amino-acid polypeptide reads, in one-letter code: Fidgetin-like protein 2 (653 aa).

Disordered stretches follow at residues 1–36 (MHWT…ELPP), 86–129 (ASFL…SGAL), and 216–240 (YGAL…APTP). Over residues 10–27 (PLNQWPEQHLDVSSTTPS) the composition is skewed to polar residues. Over residues 97–107 (EPWPGPEPPYP) the composition is skewed to pro residues. The span at 119 to 129 (KSGGGGGSGAL) shows a compositional bias: gly residues. Positions 219–240 (LPPPPGPPPAPYLTPGLPAPTP) are enriched in pro residues. ATP contacts are provided by residues alanine 395 and 435-440 (GAGKAL).

It belongs to the AAA ATPase family. It depends on Mg(2+) as a cofactor.

The protein localises to the cytoplasm. The protein resides in the cell cortex. The catalysed reaction is ATP + H2O = ADP + phosphate + H(+). In terms of biological role, microtubule-severing enzyme that negatively regulates cell migration and wound healing. In migrating cells, targets dynamic microtubules (MTs) at the leading edge and severs them, thereby suppressing motility. Microtubule severing releases ARHGEF2 which activates RHOA, which in turn regulates focal ahesion turnover via focal adhesion kinase, as opposed to F-actin polymerization, to suppress cell motility. Negative regulator of axon regeneration that suppresses axonal growth by selectively severing dynamic MTs in the distal axon shaft and growth cone. Contributes to proper cell branching during endothelial and neuronal development. This chain is Fidgetin-like protein 2, found in Homo sapiens (Human).